A 528-amino-acid chain; its full sequence is Beta-hexosaminidase subunit alpha (528 aa).

The N-terminal stretch at M1–A22 is a signal peptide. Positions L23–Q88 are excised as a propeptide. A disulfide bridge links C58 with C104. 3 N-linked (GlcNAc...) asparagine glycosylation sites follow: N115, N157, and N295. A disulfide bridge links C277 with C328. Residue E323 is the Proton donor of the active site. The tract at residues N422–R423 is critical for hydrolysis GM2 gangliosides. N487 is a glycosylation site (N-linked (GlcNAc...) asparagine). C504 and C521 are disulfide-bonded.

This sequence belongs to the glycosyl hydrolase 20 family. As to quaternary structure, there are 3 beta-hexosaminidase isozymes: isozyme A (hexosaminidase A) is a heterodimer composed of one subunit alpha and one subunit beta (chain A and B); isozyme B (hexosaminidase B) is a homodimer of two beta subunits (two chains A and B); isozyme S (hexosaminidase S) is a homodimer of two alpha subunits. The composition of the dimer (isozyme A versus isozyme S) has a significant effect on the substrate specificity of the alpha subunit active site. In terms of tissue distribution, ubiquitous. Most abundant in testis, adrenal, epididymis and heart. Low levels seen in the liver.

The protein resides in the lysosome. The catalysed reaction is Hydrolysis of terminal non-reducing N-acetyl-D-hexosamine residues in N-acetyl-beta-D-hexosaminides.. It catalyses the reaction N-acetyl-beta-D-galactosaminyl-(1-&gt;4)-beta-D-3-sulfogalactosyl-(1-&gt;4)-beta-D-glucosyl-(1&lt;-&gt;1')-ceramide + H2O = a beta-D-3-sulfogalactosyl-(1-&gt;4)-beta-D-glucosyl-(1&lt;-&gt;1')-ceramide + N-acetyl-beta-D-galactosamine. The enzyme catalyses a ganglioside GM2 (d18:1(4E)) + H2O = a ganglioside GM3 (d18:1(4E)) + N-acetyl-beta-D-galactosamine. It carries out the reaction a ganglioside GM2 + H2O = a ganglioside GM3 + N-acetyl-beta-D-galactosamine. The catalysed reaction is beta-D-GalNAc-(1-&gt;4)-alpha-L-IdoA-(1-&gt;3)-beta-D-GalNAc-4-sulfate-(1-&gt;4)-alpha-L-IdoA-(1-&gt;3)-D-GalNAc-4-sulfate + H2O = alpha-L-IdoA-(1-&gt;3)-beta-D-GalNAc-4-sulfate-(1-&gt;4)-alpha-L-IdoA-(1-&gt;3)-D-GalNAc-4-sulfate + N-acetyl-D-galactosamine. It catalyses the reaction N-acetyl-beta-D-6-sulfogalactosaminyl-(1-&gt;4)-alpha-L-iduronyl-(1-&gt;3)-N-acetyl-D-6-sulfogalactosamine + H2O = alpha-L-iduronyl-(1-&gt;3)-N-acetyl-D-6-sulfogalactosamine + N-acetyl-D-6-sulfogalactosamine. Its activity is regulated as follows. Addition of GM2A stimulates the hydrolysis of sulfated glycosphingolipid SM2 and the ganglioside GM2. Hydrolyzes the non-reducing end N-acetyl-D-hexosamine and/or sulfated N-acetyl-D-hexosamine of glycoconjugates, such as the oligosaccharide moieties from proteins and neutral glycolipids, or from certain mucopolysaccharides. The isozyme S is as active as the isozyme A on the anionic bis-sulfated glycans, the chondroitin-6-sulfate trisaccharide (C6S-3), and the dermatan sulfate pentasaccharide, and the sulfated glycosphingolipid SM2. The isozyme B does not hydrolyze each of these substrates, however hydrolyzes efficiently neutral oligosaccharide. Only the isozyme A is responsible for the degradation of GM2 gangliosides in the presence of GM2A. The protein is Beta-hexosaminidase subunit alpha of Mus musculus (Mouse).